Reading from the N-terminus, the 88-residue chain is Small ribosomal subunit protein uS17 (88 aa).

Belongs to the universal ribosomal protein uS17 family. In terms of assembly, part of the 30S ribosomal subunit.

In terms of biological role, one of the primary rRNA binding proteins, it binds specifically to the 5'-end of 16S ribosomal RNA. This Prochlorococcus marinus (strain NATL1A) protein is Small ribosomal subunit protein uS17.